The following is a 167-amino-acid chain: Protein archease (167 aa).

The residue at position 2 (Ala2) is an N-acetylalanine. Asp39, Asp166, and Ile167 together coordinate Ca(2+).

Belongs to the archease family. In terms of assembly, component of the tRNA-splicing ligase complex.

Component of the tRNA-splicing ligase complex required to facilitate the enzymatic turnover of catalytic subunit RTCB. Together with DDX1, acts by facilitating the guanylylation of RTCB, a key intermediate step in tRNA ligation. In Bos taurus (Bovine), this protein is Protein archease (ZBTB8OS).